The following is a 355-amino-acid chain: CRAL-TRIO domain-containing protein C365.01 (355 aa).

Positions 93 to 260 constitute a CRAL-TRIO domain; sequence ENGLNQNFVK…SMHGQFDETK (168 aa).

The polypeptide is CRAL-TRIO domain-containing protein C365.01 (Schizosaccharomyces pombe (strain 972 / ATCC 24843) (Fission yeast)).